The sequence spans 320 residues: Formimidoylglutamase (320 aa).

His125, Asp153, His155, Asp157, Asp244, and Asp246 together coordinate Mn(2+).

The protein belongs to the arginase family. It depends on Mn(2+) as a cofactor.

The enzyme catalyses N-formimidoyl-L-glutamate + H2O = formamide + L-glutamate. The protein operates within amino-acid degradation; L-histidine degradation into L-glutamate; L-glutamate from N-formimidoyl-L-glutamate (hydrolase route): step 1/1. Catalyzes the conversion of N-formimidoyl-L-glutamate to L-glutamate and formamide. The protein is Formimidoylglutamase of Rhodococcus jostii (strain RHA1).